The primary structure comprises 219 residues: Large ribosomal subunit protein uL29m (219 aa).

Positions 77–97 (ASKYPLPKPVSPEKLEKREST) are disordered. Positions 87 to 97 (SPEKLEKREST) are enriched in basic and acidic residues.

The protein belongs to the universal ribosomal protein uL29 family. In terms of assembly, component of the mitochondrial large ribosomal subunit. Mature mitochondrial ribosomes consist of a small (37S) and a large (54S) subunit. The 37S subunit contains at least 33 different proteins and 1 molecule of RNA (15S). The 54S subunit contains at least 45 different proteins and 1 molecule of RNA (21S).

The protein localises to the mitochondrion. This Emericella nidulans (strain FGSC A4 / ATCC 38163 / CBS 112.46 / NRRL 194 / M139) (Aspergillus nidulans) protein is Large ribosomal subunit protein uL29m (mrpl4).